Consider the following 617-residue polypeptide: Probable translation initiation factor IF-2 (617 aa).

One can recognise a tr-type G domain in the interval 14–231; the sequence is LRQPIVVVLG…VLAGLTQTYL (218 aa). The segment at 23 to 30 is G1; sequence GHVDHGKT. 23-30 is a binding site for GTP; sequence GHVDHGKT. A G2 region spans residues 48–52; sequence GITQH. The tract at residues 87-90 is G3; it reads DTPG. Residues 87-91 and 141-144 contribute to the GTP site; these read DTPGH and NKID. The G4 stretch occupies residues 141 to 144; the sequence is NKID. The tract at residues 209–211 is G5; sequence SAR.

It belongs to the TRAFAC class translation factor GTPase superfamily. Classic translation factor GTPase family. IF-2 subfamily.

Its function is as follows. Function in general translation initiation by promoting the binding of the formylmethionine-tRNA to ribosomes. Seems to function along with eIF-2. In Aeropyrum pernix (strain ATCC 700893 / DSM 11879 / JCM 9820 / NBRC 100138 / K1), this protein is Probable translation initiation factor IF-2 (infB).